We begin with the raw amino-acid sequence, 122 residues long: Large ribosomal subunit protein uL14 (122 aa).

The protein belongs to the universal ribosomal protein uL14 family. In terms of assembly, part of the 50S ribosomal subunit. Forms a cluster with proteins L3 and L19. In the 70S ribosome, L14 and L19 interact and together make contacts with the 16S rRNA in bridges B5 and B8.

Binds to 23S rRNA. Forms part of two intersubunit bridges in the 70S ribosome. The sequence is that of Large ribosomal subunit protein uL14 from Janthinobacterium sp. (strain Marseille) (Minibacterium massiliensis).